A 361-amino-acid polypeptide reads, in one-letter code: Chorismate synthase (361 aa).

2 residues coordinate NADP(+): arginine 48 and arginine 54. FMN-binding positions include 125–127 (RSS), 238–239 (NA), glycine 278, 293–297 (KPTSS), and arginine 319.

This sequence belongs to the chorismate synthase family. In terms of assembly, homotetramer. FMNH2 is required as a cofactor.

The enzyme catalyses 5-O-(1-carboxyvinyl)-3-phosphoshikimate = chorismate + phosphate. The protein operates within metabolic intermediate biosynthesis; chorismate biosynthesis; chorismate from D-erythrose 4-phosphate and phosphoenolpyruvate: step 7/7. Functionally, catalyzes the anti-1,4-elimination of the C-3 phosphate and the C-6 proR hydrogen from 5-enolpyruvylshikimate-3-phosphate (EPSP) to yield chorismate, which is the branch point compound that serves as the starting substrate for the three terminal pathways of aromatic amino acid biosynthesis. This reaction introduces a second double bond into the aromatic ring system. The protein is Chorismate synthase of Escherichia coli O1:K1 / APEC.